The primary structure comprises 405 residues: Homocitrate synthase AksA (405 aa).

Residues 23–274 (IEICDVTLRD…IERYDTTKLT (252 aa)) enclose the Pyruvate carboxyltransferase domain.

The protein belongs to the alpha-IPM synthase/homocitrate synthase family.

The catalysed reaction is acetyl-CoA + 2-oxoglutarate + H2O = (2R)-homocitrate + CoA + H(+). The enzyme catalyses 2-oxoadipate + acetyl-CoA + H2O = (R)-dihomocitrate + CoA + H(+). It carries out the reaction 2-oxoheptanedioate + acetyl-CoA + H2O = (R)-trihomocitrate + CoA + H(+). It participates in organic acid metabolism; 2-oxosuberate biosynthesis. Catalyzes the condensation of alpha-ketoglutarate and acetyl-CoA to form (R)-homocitrate. Can also catalyze the condensation of alpha-ketoadipate with acetyl-CoA to form (R)-homo(2)citrate, and the condensation of alpha-ketopimelate with acetyl-CoA to form (R)-homo(3)citrate. These reactions are part of the biosynthesis pathway of coenzyme B and biotin. The polypeptide is Homocitrate synthase AksA (aksA) (Methanosarcina acetivorans (strain ATCC 35395 / DSM 2834 / JCM 12185 / C2A)).